A 208-amino-acid polypeptide reads, in one-letter code: Meiotically up-regulated gene 9 protein (208 aa).

A disordered region spans residues 77 to 114; the sequence is VPASNEKAARVSNLKTVPSLKRENKEVNANSKPPVKQQ.

Has a role in meiosis. The chain is Meiotically up-regulated gene 9 protein (mug9) from Schizosaccharomyces pombe (strain 972 / ATCC 24843) (Fission yeast).